Consider the following 566-residue polypeptide: Arginine--tRNA ligase (566 aa).

Positions 121-131 match the 'HIGH' region motif; it reads PNIAKPMSMGH.

Belongs to the class-I aminoacyl-tRNA synthetase family. As to quaternary structure, monomer.

The protein resides in the cytoplasm. It catalyses the reaction tRNA(Arg) + L-arginine + ATP = L-arginyl-tRNA(Arg) + AMP + diphosphate. In Oenococcus oeni (strain ATCC BAA-331 / PSU-1), this protein is Arginine--tRNA ligase.